Reading from the N-terminus, the 923-residue chain is MADEALAGLDEGALRKLLEVTADLAERRRIRSAIRELQRQELEREEEALASKRFRAERQDNKENWLHSQQREAEQQAALARLAGRLESMNDVEELTTLLRSAGEYEERKLIRAAIRRVRAQEIKAATLAGRLCSRLPSSGPREDSRRQAAHTLDPGKVPEPEQQEQQTEVLEPTPTPEDTSQDVTTVTLLLRAPPGGRPSSPASPHNSPTSASPEPLLEPAGAQCPAVEAPVSSEPLPHPSEAPSPEPPMSPVPSSSRGRVISKPLPGPTEPSDTLDSIRGFSNTKRADPSETKSCQRSLSVLSPRQPTPNREPTSLAGPSQFRRVGSVRDRVQKFTSDSPVVARLQDGPPRTALASPTPTRLPGPSLISTTPASSSSSNSSSPSPSDTSSHKKQRELAHSLAELQSCPQEEGPGGRGLALRSLENRAGGPKPCSEEPSTPPPVAVGTGEPGGSMKTTFTIEIKDGRGQASTGRVLLPTGNQRAELTLGLRAPPTLLSTSSGGKNTITHISNPGTVTRLGSVTHVTTFSHASPGNRGGCNFKMEPDPAEPPSTTVEAANGAEQARVDKGPEGRSPLSAEELTAIEDEGVLDKMLDQTTNFEERKLIRAALRELRQRKRDQRDKERERRLREARARPGESRSNVATETTTRHSQRAADGSTVGTVTKTERLVHSNDGTQTARTTTVESSFMRRLENGSSSSSTTTTTVQTKSFSSSSSSSSSKKMGSIFDREDQTSSRPGSLAALERRQAEKKKELMKAQSLPKTSASQARKAMIEKLEKEGSAGGPGTPRTAVQRSTSFGVPNANSIKQMLLDWCRAKTRGYEHVDIQNFSSSWSDGMAFCALVHNFFPEAFDYGQLSPQNRRQNFEMAFSSAEMLVDCVPLVEVEDMMIMGKKPDPKCVFTYVQSLYNHLRRHELRLRGKNV.

Ala-2 is modified (N-acetylalanine). A coiled-coil region spans residues 24–89 (LAERRRIRSA…ARLAGRLESM (66 aa)). The disordered stretch occupies residues 134–456 (SRLPSSGPRE…GTGEPGGSMK (323 aa)). Composition is skewed to low complexity over residues 164–179 (QEQQTEVLEPTPTPED) and 192–205 (RAPPGGRPSSPASP). Positions 237–252 (LPHPSEAPSPEPPMSP) are enriched in pro residues. Composition is skewed to polar residues over residues 272–285 (PSDTLDSIRGFSNT) and 293–314 (TKSCQRSLSVLSPRQPTPNREP). Ser-299, Ser-301, Ser-304, and Ser-340 each carry phosphoserine. Phosphothreonine occurs at positions 359 and 372. The span at 366–389 (PSLISTTPASSSSSNSSSPSPSDT) shows a compositional bias: low complexity. Phosphoserine is present on residues Ser-501, Ser-521, and Ser-574. 2 disordered regions span residues 542–578 (KMEPDPAEPPSTTVEAANGAEQARVDKGPEGRSPLSA) and 615–772 (QRKR…ARKA). Residues 601–628 (EERKLIRAALRELRQRKRDQRDKERERR) are a coiled coil. Residues 615–638 (QRKRDQRDKERERRLREARARPGE) are compositionally biased toward basic and acidic residues. A Phosphoserine modification is found at Ser-641. Polar residues predominate over residues 674–687 (NDGTQTARTTTVES). The segment covering 697-721 (SSSSSTTTTTVQTKSFSSSSSSSSS) has biased composition (low complexity). Phosphoserine is present on Ser-735. Residues 744–756 (LERRQAEKKKELM) are compositionally biased toward basic and acidic residues. Position 798 is a phosphoserine (Ser-798). In terms of domain architecture, Calponin-homology (CH) spans 805 to 912 (NSIKQMLLDW…YVQSLYNHLR (108 aa)).

It belongs to the smoothelin family.

The protein resides in the cytoplasm. The protein localises to the cytoskeleton. In terms of biological role, structural protein of the cytoskeleton. The polypeptide is Smoothelin (Smtn) (Mus musculus (Mouse)).